Consider the following 164-residue polypeptide: Phosphopantetheine adenylyltransferase (164 aa).

S10 lines the substrate pocket. Residues 10–11 and H18 contribute to the ATP site; that span reads SF. Substrate is bound by residues K42, L74, and R88. ATP is bound by residues 89-91, E99, and 124-130; these read GLR and YAFLSSS.

Belongs to the bacterial CoaD family. Homohexamer. Mg(2+) serves as cofactor.

Its subcellular location is the cytoplasm. It carries out the reaction (R)-4'-phosphopantetheine + ATP + H(+) = 3'-dephospho-CoA + diphosphate. It functions in the pathway cofactor biosynthesis; coenzyme A biosynthesis; CoA from (R)-pantothenate: step 4/5. Reversibly transfers an adenylyl group from ATP to 4'-phosphopantetheine, yielding dephospho-CoA (dPCoA) and pyrophosphate. In Geobacillus thermodenitrificans (strain NG80-2), this protein is Phosphopantetheine adenylyltransferase.